An 88-amino-acid chain; its full sequence is MEYRKRVDALVFFSLLLLGYFAAHAHGKGHVTDDVGVSTPAKEGIMQGNGARCVVGFPPCKDNKCYCCIGGRTHARYSTMAECRHACF.

Residues 1–27 (MEYRKRVDALVFFSLLLLGYFAAHAHG) form the signal peptide. Cys65 and Cys87 are oxidised to a cystine.

Belongs to the MEG family. Expressed exclusively in endosperm.

The protein is Protein MATERNALLY EXPRESSED GENE 2 (MEG2) of Zea mays (Maize).